We begin with the raw amino-acid sequence, 492 residues long: KRAB-A domain-containing protein 2 (492 aa).

One can recognise a KRAB domain in the interval 36 to 117 (LFQEATAFEN…MREKFLMSVT (82 aa)). S115 is modified (phosphoserine). The residue at position 117 (T117) is a Phosphothreonine. One can recognise an Integrase catalytic domain in the interval 247–415 (RGLAPKPMTF…SPFEAMFGYK (169 aa)). Residues 427–457 (RETVATLQTEEELEIAEEQLENSLWIRQEER) adopt a coiled-coil conformation. The span at 455–465 (EERAEIGADRS) shows a compositional bias: basic and acidic residues. Positions 455–492 (EERAEIGADRSDMDDDMDPTPEASEPSTSQGTSGLLCW) are disordered. The span at 479–492 (EPSTSQGTSGLLCW) shows a compositional bias: polar residues.

This Homo sapiens (Human) protein is KRAB-A domain-containing protein 2 (KRBA2).